Consider the following 252-residue polypeptide: Chitooligosaccharide deacetylase (252 aa).

H61 and H125 together coordinate Mg(2+).

Belongs to the YdjC deacetylase family. ChbG subfamily. In terms of assembly, homodimer. It depends on Mg(2+) as a cofactor.

It localises to the cytoplasm. It catalyses the reaction N,N'-diacetylchitobiose + H2O = N-acetyl-beta-D-glucosaminyl-(1-&gt;4)-D-glucosamine + acetate. It carries out the reaction diacetylchitobiose-6'-phosphate + H2O = N'-monoacetylchitobiose-6'-phosphate + acetate. It functions in the pathway glycan degradation; chitin degradation. Involved in the degradation of chitin. ChbG is essential for growth on the acetylated chitooligosaccharides chitobiose and chitotriose but is dispensable for growth on cellobiose and chitosan dimer, the deacetylated form of chitobiose. Deacetylation of chitobiose-6-P and chitotriose-6-P is necessary for both the activation of the chb promoter by the regulatory protein ChbR and the hydrolysis of phosphorylated beta-glucosides by the phospho-beta-glucosidase ChbF. Catalyzes the removal of only one acetyl group from chitobiose-6-P to yield monoacetylchitobiose-6-P, the inducer of ChbR and the substrate of ChbF. The protein is Chitooligosaccharide deacetylase of Citrobacter koseri (strain ATCC BAA-895 / CDC 4225-83 / SGSC4696).